Reading from the N-terminus, the 496-residue chain is UDP-glycosyltransferase 73C4 (496 aa).

UDP-alpha-D-glucose is bound by residues S297, 357–359 (SPQ), 374–382 (HCGWNSTLE), and 396–399 (FGDQ). A disordered region spans residues 450–475 (SDDAKERRRRVKELGESAHKAVEEGG). Basic and acidic residues predominate over residues 451-472 (DDAKERRRRVKELGESAHKAVE).

Belongs to the UDP-glycosyltransferase family.

The sequence is that of UDP-glycosyltransferase 73C4 (UGT73C4) from Arabidopsis thaliana (Mouse-ear cress).